Here is a 646-residue protein sequence, read N- to C-terminus: Esterase EstA (646 aa).

The signal sequence occupies residues 1 to 24 (MIRMALKPLVAACLLASLSTAPQA). Over 25 to 397 (APSPYSTLVV…DSAASGDGNG (373 aa)) the chain is Extracellular. Serine 38 functions as the Nucleophile in the catalytic mechanism. Catalysis depends on residues aspartate 310 and histidine 313. In terms of domain architecture, Autotransporter spans 366-646 (QNVGQWRGFV…SVSLALSLDF (281 aa)). Residues 398–408 (YNLTLGGSYRI) traverse the membrane as a beta stranded segment. The Periplasmic portion of the chain corresponds to 409–410 (DE). Residues 411–421 (AWRAGVAAGFY) traverse the membrane as a beta stranded segment. The Extracellular portion of the chain corresponds to 422–437 (RQKLEAGAKDSDYRMN). A beta stranded transmembrane segment spans residues 438 to 447 (SYMASAFVQY). Topologically, residues 448-451 (QENR) are periplasmic. The beta stranded transmembrane segment at 452–461 (WWADAALTGG) threads the bilayer. Residues 462-488 (YLDYDDLKRKFALGGGERSEKGDTNGH) are Extracellular-facing. The chain crosses the membrane as a beta stranded span at residues 489 to 500 (LWAFSARLGYDI). Residues 501–507 (AQQADSP) lie on the Periplasmic side of the membrane. The chain crosses the membrane as a beta stranded span at residues 508 to 518 (WHLSPFVSADY). Residues 519–547 (ARVEVDGYSEKGASATALDYDDQKRSSKR) are Extracellular-facing. Residues 548-558 (LGAGLQGKYAF) form a beta stranded membrane-spanning segment. At 559-561 (GSD) the chain is on the periplasmic side. A beta stranded membrane pass occupies residues 562–571 (TQLFAEYAHE). Topologically, residues 572 to 605 (REYEDDTQDLTMSLNSLPGNRFTLEGYTPQDHLN) are extracellular. The beta stranded transmembrane segment at 606-615 (RVSLGFSQKL) threads the bilayer. At 616–618 (APE) the chain is on the periplasmic side. The beta stranded transmembrane segment at 619-628 (LSLRGGYNWR) threads the bilayer. At 629–636 (KGEDDTQQ) the chain is on the extracellular side. A beta stranded transmembrane segment spans residues 637–646 (SVSLALSLDF).

Belongs to the 'GDSL' lipolytic enzyme family.

It is found in the cell outer membrane. The enzyme catalyses a carboxylic ester + H2O = an alcohol + a carboxylate + H(+). In terms of biological role, esterase whose enzymatic activity is required for rhamnolipid production, all kinds of cell motility (swimming, swarming, and twitching), and biofilm formation; the exact role of EstA in these processes is unclear. In vitro, has pronounced esterase activities towards p-nitrophenyl esters of short acyl chain length (C4-C6) and Tween detergents. Also shows relatively high activity towards beta-naphthyl butyrate, whereas its activities towards triacylglycerols and acyls-CoA are negligible. This chain is Esterase EstA (estA), found in Pseudomonas aeruginosa (strain ATCC 15692 / DSM 22644 / CIP 104116 / JCM 14847 / LMG 12228 / 1C / PRS 101 / PAO1).